The primary structure comprises 222 residues: MIF4G domain-containing protein B (222 aa).

Residues 3-205 (NSSKEDYKIQ…LEILEFRAGG (203 aa)) form the MIF4G domain.

The protein belongs to the MIF4GD family. In terms of assembly, interacts with eif4g1, eif4g2 and slbp; probably tethered by SLBP to the 3'-end of mRNAs ending with the histone stem-loop, it also interacts with eif4g1 which is bound to their 5'-end.

It localises to the cytoplasm. The protein resides in the nucleus. Functions in replication-dependent translation of histone mRNAs which differ from other eukaryotic mRNAs in that they do not end with a poly-A tail but a stem-loop. May participate in circularizing those mRNAs specifically enhancing their translation. The polypeptide is MIF4G domain-containing protein B (mif4gdb) (Danio rerio (Zebrafish)).